Here is a 937-residue protein sequence, read N- to C-terminus: von Willebrand factor (937 aa).

Positions 1–22 (MFPTRLARLLLAVALTLPGALC) are cleaved as a signal peptide. Residues 23 to 762 (GEGALGKSSM…SSPLSHRSKR (740 aa)) constitute a propeptide that is removed on maturation. In terms of domain architecture, VWFD 1 spans 33 to 201 (ARCSLFGADF…ALSSEEQRCP (169 aa)). Intrachain disulfides connect cysteine 35–cysteine 162 and cysteine 57–cysteine 200. Residues asparagine 99, asparagine 156, and asparagine 211 are each glycosylated (N-linked (GlcNAc...) asparagine). Positions 294 to 347 (CPTGMEYKECVSPCHRTCRSLSITEVCREQCVDGCSCPEGQLLDEGRCVESTEC) constitute a TIL 1 domain. A VWFD 2 domain is found at 385 to 559 (GECLITGQSH…NSWKLRADCE (175 aa)). 3 cysteine pairs are disulfide-bonded: cysteine 387-cysteine 523, cysteine 409-cysteine 558, and cysteine 431-cysteine 439. Residues 651–706 (CPHGQVYQQCGTPCNLTCRSLSHPDEECTEVCLEGCFCPPGLFLDETGSCVPKAQC) enclose the TIL 2 domain. N-linked (GlcNAc...) asparagine glycosylation occurs at asparagine 665. The amino-terminal stretch occupies residues 763 to 786 (SLSCRPPMVKVVCPADNPRAEGLE). 2 disulfides stabilise this stretch: cysteine 766-cysteine 807 and cysteine 775-cysteine 803. The E1 stretch occupies residues 787–832 (CTKTCQNYDLECMSTGCVSGCLPAPGMVRHENRCVALERCPCFHQG). A CX region spans residues 825–852 (RCPCFHQGREYAPGDRVKVDCNSCVCQD). A glycan (N-linked (GlcNAc...) asparagine) is linked at asparagine 856. The 74-residue stretch at 864–937 (ASCSALGLAH…VEGGEIELFD (74 aa)) folds into the VWFD 3 domain. An intrachain disulfide couples cysteine 913 to cysteine 920.

As to quaternary structure, multimeric. Interacts with F8. All cysteine residues are involved in intrachain or interchain disulfide bonds. In terms of processing, N- and O-glycosylated. Plasma.

It localises to the secreted. The protein resides in the extracellular space. The protein localises to the extracellular matrix. Important in the maintenance of hemostasis, it promotes adhesion of platelets to the sites of vascular injury by forming a molecular bridge between sub-endothelial collagen matrix and platelet-surface receptor complex GPIb-IX-V. Also acts as a chaperone for coagulation factor VIII, delivering it to the site of injury, stabilizing its heterodimeric structure and protecting it from premature clearance from plasma. This is von Willebrand factor (VWF) from Bos taurus (Bovine).